Reading from the N-terminus, the 96-residue chain is MQALITISDKQYLVKQGDKLFVPRQQAAIGDKLTIASLAQIDGANTTLQNSNSVQAVVLEHVKDEKVIVFKKKRRKRYQSRNGHRQQMTHIEVLSL.

Belongs to the bacterial ribosomal protein bL21 family. As to quaternary structure, part of the 50S ribosomal subunit. Contacts protein L20.

This protein binds to 23S rRNA in the presence of protein L20. The polypeptide is Large ribosomal subunit protein bL21 (Chlorobium chlorochromatii (strain CaD3)).